The primary structure comprises 250 residues: uncharacterized protein (250 aa).

The segment at 182–205 (HTPIVSIQTPPPPAPTPNRPDVPA) is disordered. Positions 190–201 (TPPPPAPTPNRP) are enriched in pro residues. Residues 230-250 (TRISVIPLLSVLLLVIIIILL) form a helical membrane-spanning segment.

This sequence belongs to the ascovirus HvAV ORF18 family.

Its subcellular location is the membrane. This is an uncharacterized protein from Spodoptera frugiperda ascovirus 1a (SfAV-1a).